Reading from the N-terminus, the 337-residue chain is Inositol 2-dehydrogenase (337 aa).

The protein belongs to the Gfo/Idh/MocA family. As to quaternary structure, homotetramer.

The enzyme catalyses myo-inositol + NAD(+) = scyllo-inosose + NADH + H(+). Functionally, involved in the oxidation of myo-inositol (MI) to 2-keto-myo-inositol (2KMI or 2-inosose). In Klebsiella pneumoniae (strain 342), this protein is Inositol 2-dehydrogenase.